The primary structure comprises 272 residues: MTTLACQKLAPHPESPRHQHAGPWLVWLHGLLGSGQDWLPVAQLCGDYPSLLIDLPGHGQSVSLSADGFADISRQLSQTLQANGIREYWLAGYSLGGRIAIYHACYGRHHGLQGLLVEGGNLGLENAELRQARLQQDRQWAQRFRQEPLPQVLDDWYQQAVFADLDPQQREQLVLLRADNHGPAVAEMLEATSLGHQPWLLPALQRLNVPYTYLCGDRDHKFLQLAQQYRLPLHTLARAGHNAHRANPGAFAAQVLAFLSQSSCLPPSSLSR.

It belongs to the AB hydrolase superfamily. MenH family. In terms of assembly, monomer.

It catalyses the reaction 5-enolpyruvoyl-6-hydroxy-2-succinyl-cyclohex-3-ene-1-carboxylate = (1R,6R)-6-hydroxy-2-succinyl-cyclohexa-2,4-diene-1-carboxylate + pyruvate. It functions in the pathway quinol/quinone metabolism; 1,4-dihydroxy-2-naphthoate biosynthesis; 1,4-dihydroxy-2-naphthoate from chorismate: step 3/7. The protein operates within quinol/quinone metabolism; menaquinone biosynthesis. Its function is as follows. Catalyzes a proton abstraction reaction that results in 2,5-elimination of pyruvate from 2-succinyl-5-enolpyruvyl-6-hydroxy-3-cyclohexene-1-carboxylate (SEPHCHC) and the formation of 2-succinyl-6-hydroxy-2,4-cyclohexadiene-1-carboxylate (SHCHC). This is 2-succinyl-6-hydroxy-2,4-cyclohexadiene-1-carboxylate synthase from Yersinia pseudotuberculosis serotype IB (strain PB1/+).